The sequence spans 334 residues: Galactinol synthase 4 (334 aa).

Residue K104 is part of the active site. 3 residues coordinate Mn(2+): D120, D122, and H258.

Belongs to the glycosyltransferase 8 family. Galactosyltransferase subfamily. A divalent metal cation serves as cofactor.

The protein localises to the cytoplasm. The catalysed reaction is myo-inositol + UDP-alpha-D-galactose = alpha-D-galactosyl-(1-&gt;3)-1D-myo-inositol + UDP + H(+). In terms of biological role, galactinol synthase involved in the biosynthesis of raffinose family oligosaccharides (RFOs) that function as osmoprotectants. May promote plant stress tolerance. This Arabidopsis thaliana (Mouse-ear cress) protein is Galactinol synthase 4 (GOLS4).